The chain runs to 79 residues: Small ribosomal subunit protein uS17 (79 aa).

The protein belongs to the universal ribosomal protein uS17 family. As to quaternary structure, part of the 30S ribosomal subunit.

In terms of biological role, one of the primary rRNA binding proteins, it binds specifically to the 5'-end of 16S ribosomal RNA. This Rhodospirillum rubrum (strain ATCC 11170 / ATH 1.1.1 / DSM 467 / LMG 4362 / NCIMB 8255 / S1) protein is Small ribosomal subunit protein uS17.